The sequence spans 595 residues: Leiomodin-1 (595 aa).

3 disordered regions span residues 1–69, 81–322, and 467–568; these read MSKV…EAML, QREM…KVKN, and DKQR…QEKN. Phosphoserine is present on Ser-12. Over residues 27 to 40 the composition is skewed to acidic residues; sequence EEMEELEKELDVVD. Basic and acidic residues-rich tracts occupy residues 81–110, 117–127, 134–192, 200–223, 230–249, 257–287, 467–476, and 484–493; these read QREMSVDESKQVGRKTDAKNGEEKDSDASR, QDSDLGKEPKK, FSRD…EKTG, SRDKDKKKEEVKEPSKKEEVKLTA, GRREDGRLKESSKENKKPED, RDWRKEDEKVKKEENQPDKEVREESKTKAPE, DKQRQKRLQE, and SGEKKDRLEV. Ser-85 bears the Phosphoserine mark. Ser-135 carries the post-translational modification Phosphoserine. A run of 8 repeats spans residues 165-179, 180-195, 196-211, 212-226, 227-240, 242-255, 256-271, and 272-288. An 8 X approximate tandem repeats region spans residues 165 to 288; that stretch reads AAVDRKESGK…EESKTKAPEK (124 aa). The 5 X 4 AA approximate tandem repeats stretch occupies residues 503 to 522; sequence SPKPSPQPSPKPAPKNSPKK. 2 stretches are compositionally biased toward pro residues: residues 505–517 and 527–538; these read KPSPQPSPKPAPK and AAPPPPPPPLAP. Ser-550 carries the post-translational modification Phosphoserine. The region spanning 569 to 588 is the WH2 domain; it reads SRDQLLAAIRSSNLKQLKKV.

Belongs to the tropomodulin family. In terms of tissue distribution, detected in aorta, urinary bladder and uterus (at protein level). Detected in smooth muscle cells. Detected in aorta, bladder, colon, intestine, stomach and uterus.

The protein localises to the cytoplasm. Its subcellular location is the myofibril. The protein resides in the sarcomere. It is found in the cytoskeleton. Its function is as follows. Required for proper contractility of visceral smooth muscle cells. Mediates nucleation of actin filaments. The sequence is that of Leiomodin-1 (Lmod1) from Mus musculus (Mouse).